Consider the following 116-residue polypeptide: Large ribosomal subunit protein uL18 (116 aa).

This sequence belongs to the universal ribosomal protein uL18 family. As to quaternary structure, part of the 50S ribosomal subunit; part of the 5S rRNA/L5/L18/L25 subcomplex. Contacts the 5S and 23S rRNAs.

Its function is as follows. This is one of the proteins that bind and probably mediate the attachment of the 5S RNA into the large ribosomal subunit, where it forms part of the central protuberance. The sequence is that of Large ribosomal subunit protein uL18 from Pseudomonas putida (strain GB-1).